The chain runs to 382 residues: Protein phosphatase 1A (382 aa).

Residue Gly2 is the site of N-myristoyl glycine attachment. The PPM-type phosphatase domain maps to 23-291; sequence RYGLSSMQGW…DNMSVILICF (269 aa). Positions 60, 61, 239, and 282 each coordinate Mn(2+). 2 positions are modified to phosphoserine: Ser375 and Ser377.

Belongs to the PP2C family. In terms of assembly, monomer. Interacts with SMAD2; the interaction dephosphorylates SMAD2 in its C-terminal SXS motif resulting in disruption of the SMAD2/SMAD4 complex, SMAD2 nuclear export and termination of the TGF-beta-mediated signaling. Interacts with SMAD2; the interaction dephosphorylates SMAD2 in its C-terminal SXS motif resulting in disruption of the SMAD2/SMAD4 complex, SMAD2 nuclear export and termination of the TGF-beta-mediated signaling. Interacts with the phosphorylated form of IKBKB/IKKB. Mg(2+) is required as a cofactor. It depends on Mn(2+) as a cofactor. In terms of processing, N-myristoylation is essential for the recognition of its substrates for dephosphorylation.

It localises to the nucleus. It is found in the cytoplasm. The protein localises to the cytosol. The protein resides in the membrane. It catalyses the reaction O-phospho-L-seryl-[protein] + H2O = L-seryl-[protein] + phosphate. The catalysed reaction is O-phospho-L-threonyl-[protein] + H2O = L-threonyl-[protein] + phosphate. Functionally, enzyme with a broad specificity. Negatively regulates TGF-beta signaling through dephosphorylating SMAD2 and SMAD3, resulting in their dissociation from SMAD4, nuclear export of the SMADs and termination of the TGF-beta-mediated signaling. Dephosphorylates PRKAA1 and PRKAA2. Plays an important role in the termination of TNF-alpha-mediated NF-kappa-B activation through dephosphorylating and inactivating IKBKB/IKKB. In Mus musculus (Mouse), this protein is Protein phosphatase 1A (Ppm1a).